We begin with the raw amino-acid sequence, 407 residues long: Peptidase T (407 aa).

H82 provides a ligand contact to Zn(2+). D84 is an active-site residue. D143 contributes to the Zn(2+) binding site. Residue E177 is the Proton acceptor of the active site. Zn(2+)-binding residues include E178, D200, and H382.

Belongs to the peptidase M20B family. The cofactor is Zn(2+).

The protein localises to the cytoplasm. The catalysed reaction is Release of the N-terminal residue from a tripeptide.. Its function is as follows. Cleaves the N-terminal amino acid of tripeptides. The polypeptide is Peptidase T (Streptococcus pyogenes serotype M6 (strain ATCC BAA-946 / MGAS10394)).